Reading from the N-terminus, the 365-residue chain is Chorismate synthase (365 aa).

Arg-48 and Arg-54 together coordinate NADP(+). FMN-binding positions include 125-127 (RSS), 237-238 (NA), Gly-277, 292-296 (KPTSS), and Arg-318.

This sequence belongs to the chorismate synthase family. As to quaternary structure, homotetramer. The cofactor is FMNH2.

It carries out the reaction 5-O-(1-carboxyvinyl)-3-phosphoshikimate = chorismate + phosphate. It participates in metabolic intermediate biosynthesis; chorismate biosynthesis; chorismate from D-erythrose 4-phosphate and phosphoenolpyruvate: step 7/7. In terms of biological role, catalyzes the anti-1,4-elimination of the C-3 phosphate and the C-6 proR hydrogen from 5-enolpyruvylshikimate-3-phosphate (EPSP) to yield chorismate, which is the branch point compound that serves as the starting substrate for the three terminal pathways of aromatic amino acid biosynthesis. This reaction introduces a second double bond into the aromatic ring system. The sequence is that of Chorismate synthase from Polaromonas naphthalenivorans (strain CJ2).